Here is a 582-residue protein sequence, read N- to C-terminus: Hemagglutinin-neuraminidase (582 aa).

The Intravirion portion of the chain corresponds to M1 to R34. The chain crosses the membrane as a helical; Signal-anchor for type II membrane protein span at residues I35–L55. Residues V56–T582 are Virion surface-facing. The N-linked (GlcNAc...) asparagine; by host glycan is linked to N127. Cystine bridges form between C178/C202, C192/C253, and C244/C257. The involved in neuraminidase activity stretch occupies residues N240–S245. N284 and N329 each carry an N-linked (GlcNAc...) asparagine; by host glycan. Cystine bridges form between C350–C471, C382–C392, and C465–C475. N-linked (GlcNAc...) asparagine; by host glycosylation is found at N400 and N448. N507 carries an N-linked (GlcNAc...) asparagine; by host glycan. An intrachain disulfide couples C545 to C556.

It belongs to the paramyxoviruses hemagglutinin-neuraminidase family. As to quaternary structure, homotetramer; composed of disulfide-linked homodimers. Interacts with F protein trimer.

The protein resides in the virion membrane. It localises to the host cell membrane. The catalysed reaction is Hydrolysis of alpha-(2-&gt;3)-, alpha-(2-&gt;6)-, alpha-(2-&gt;8)- glycosidic linkages of terminal sialic acid residues in oligosaccharides, glycoproteins, glycolipids, colominic acid and synthetic substrates.. Functionally, attaches the virus to alpha-2,3-linked sialic acid-containing cell receptors and thereby initiating infection. Binding of HN protein to the receptor induces a conformational change that allows the F protein to trigger virion/cell membranes fusion. Binds to the glycan motifs sialyl Lewis (SLe) and GM2 ganglioside (GM2-glycan). Neuraminidase activity ensures the efficient spread of the virus by dissociating the mature virions from the neuraminic acid containing glycoproteins. The polypeptide is Hemagglutinin-neuraminidase (HN) (Mumps virus (strain RW) (MuV)).